The sequence spans 253 residues: Proteasome subunit alpha (253 aa).

Residues 232–242 (AAGASTAGEAG) are compositionally biased toward low complexity. The interval 232–253 (AAGASTAGEAGSAEDEGSDDEK) is disordered. Residues 243 to 253 (SAEDEGSDDEK) show a composition bias toward acidic residues.

Belongs to the peptidase T1A family. In terms of assembly, the 20S proteasome core is composed of 14 alpha and 14 beta subunits that assemble into four stacked heptameric rings, resulting in a barrel-shaped structure. The two inner rings, each composed of seven catalytic beta subunits, are sandwiched by two outer rings, each composed of seven alpha subunits. The catalytic chamber with the active sites is on the inside of the barrel. Has a gated structure, the ends of the cylinder being occluded by the N-termini of the alpha-subunits. Is capped by the proteasome-associated ATPase, ARC.

Its subcellular location is the cytoplasm. It participates in protein degradation; proteasomal Pup-dependent pathway. With respect to regulation, the formation of the proteasomal ATPase ARC-20S proteasome complex, likely via the docking of the C-termini of ARC into the intersubunit pockets in the alpha-rings, may trigger opening of the gate for substrate entry. Interconversion between the open-gate and close-gate conformations leads to a dynamic regulation of the 20S proteasome proteolysis activity. In terms of biological role, component of the proteasome core, a large protease complex with broad specificity involved in protein degradation. This Streptomyces avermitilis (strain ATCC 31267 / DSM 46492 / JCM 5070 / NBRC 14893 / NCIMB 12804 / NRRL 8165 / MA-4680) protein is Proteasome subunit alpha.